Reading from the N-terminus, the 448-residue chain is MILTSNVKLMPGSKVEAVIQISKEFVKAKYNEILKDYSSRLKVKGFRTGRVPFSIIEGKYSDNIRALAIENLIHKSLEEFFESAIYKPLSYAVPKILDEKLEINFDKDFEFTFVYESYPEFEISDISNFKVEIPEVVISDSDIEDELKLLQFENSIIVEDNGSVKVGSIVRVDFVELDDSLNEILATKRQDFVLTVGESDDYYGFGYDIIGMKKDEEKIVEKNYGSDYKFSELANTSKRLKIGVKDIKRRDIPELDDAFAKDVKDSLNTLEDLRDYVRENMLKVVQEKTNSLKLSKLLSGIAEKVNIDVPSSMFEAELKNVINEFSHQNKINITQLQNSSTGLEGVNDVFKENVLNKLKSKLVFQKMVDNDSSEVTELDLENELIKQAQNLKMAPQDVKKFYKERNLFGLLKDEIKRQKVKEKILQDLEEIKLEKVSFRDFVNYKTGE.

The region spanning 167–253 (GSIVRVDFVE…VKDIKRRDIP (87 aa)) is the PPIase FKBP-type domain.

This sequence belongs to the FKBP-type PPIase family. Tig subfamily.

The protein resides in the cytoplasm. It catalyses the reaction [protein]-peptidylproline (omega=180) = [protein]-peptidylproline (omega=0). Functionally, involved in protein export. Acts as a chaperone by maintaining the newly synthesized protein in an open conformation. Functions as a peptidyl-prolyl cis-trans isomerase. The sequence is that of Trigger factor from Borrelia duttonii (strain Ly).